The following is a 135-amino-acid chain: Protein Wnt-7b (135 aa).

2 disulfides stabilise this stretch: Cys-3–Cys-17 and Cys-5–Cys-12. Ser-9 carries the O-palmitoleoyl serine; by PORCN lipid modification. The disordered linker stretch occupies residues 41 to 69; the sequence is VEVVRANRLRQPTFLKIKKVRSYQKPMET. 3 cysteine pairs are disulfide-bonded: Cys-81/Cys-112, Cys-97/Cys-107, and Cys-134/Cys-135. Asn-98 carries an N-linked (GlcNAc...) asparagine glycan.

The protein belongs to the Wnt family. Palmitoleoylation is required for efficient binding to frizzled receptors. Depalmitoleoylation leads to Wnt signaling pathway inhibition. In adults, in brain and lung.

Its subcellular location is the secreted. It is found in the extracellular space. The protein localises to the extracellular matrix. Ligand for members of the frizzled family of seven transmembrane receptors that functions in the canonical Wnt/beta-catenin signaling pathway. Required for normal fusion of the chorion and the allantois during placenta development. Required for central nervous system (CNS) angiogenesis and blood-brain barrier regulation. The protein is Protein Wnt-7b (wnt7b) of Xenopus laevis (African clawed frog).